The following is a 186-amino-acid chain: Ribosome-recycling factor (186 aa).

The disordered stretch occupies residues 135–164 (DGMDDLKKAEKDGEIGQDESRAQSERVQKM).

It belongs to the RRF family.

The protein localises to the cytoplasm. In terms of biological role, responsible for the release of ribosomes from messenger RNA at the termination of protein biosynthesis. May increase the efficiency of translation by recycling ribosomes from one round of translation to another. This chain is Ribosome-recycling factor, found in Rhizobium meliloti (strain 1021) (Ensifer meliloti).